A 77-amino-acid chain; its full sequence is Conodipine-M alpha chain (77 aa).

Q1 carries the pyrrolidone carboxylic acid modification. H36 is a catalytic residue.

Heterodimer of an alpha and a beta chains; probably disulfide-linked. Requires Ca(2+) as cofactor. As to expression, expressed by the venom duct.

It localises to the secreted. The catalysed reaction is a 1,2-diacyl-sn-glycero-3-phosphocholine + H2O = a 1-acyl-sn-glycero-3-phosphocholine + a fatty acid + H(+). Inhibited by linoleoyl amide and MG14. In terms of biological role, heterodimer: conodipine-M catalyzes the calcium-dependent hydrolysis of the 2-acyl groups in 3-sn-phosphoglycerides. This activity may be supported by the alpha chain. Conodipine-M inhibits the binding of isradipine (a ligand specific for L-type calcium channel) to L-type calcium channels. This Conus magus (Magical cone) protein is Conodipine-M alpha chain.